The chain runs to 252 residues: Sulfoacetaldehyde reductase 2 (252 aa).

6 to 30 (LITGATSGFGRAAARRFADAGWSLI) is an NADP(+) binding site. Substrate is bound at residue S139. Catalysis depends on Y152, which acts as the Proton acceptor.

It belongs to the short-chain dehydrogenases/reductases (SDR) family. As to quaternary structure, homodimer and heterotetramer.

It catalyses the reaction 2-hydroxyethane-1-sulfonate + NADP(+) = sulfoacetaldehyde + NADPH + H(+). Its pathway is organosulfur degradation. In terms of biological role, catalyzes the formation of isethionate from 2-sulfoacetaldehyde in the deaminative pathway of taurine. Constitutively expressed enzyme that only mediates a small part of the activity observed in taurine-grown cells. The sequence is that of Sulfoacetaldehyde reductase 2 (isfD2) from Chromohalobacter salexigens (strain ATCC BAA-138 / DSM 3043 / CIP 106854 / NCIMB 13768 / 1H11).